We begin with the raw amino-acid sequence, 261 residues long: Kallikrein 1-related peptidase b21 (261 aa).

Residues methionine 1–alanine 17 form the signal peptide. The propeptide at alanine 18–arginine 24 is activation peptide. The Peptidase S1 domain maps to isoleucine 25–alanine 258. 5 disulfide bridges follow: cysteine 31–cysteine 173, cysteine 50–cysteine 66, cysteine 152–cysteine 219, cysteine 184–cysteine 198, and cysteine 209–cysteine 234. The active-site Charge relay system is histidine 65. The N-linked (GlcNAc...) asparagine glycan is linked to asparagine 102. Aspartate 120 functions as the Charge relay system in the catalytic mechanism. Serine 213 (charge relay system) is an active-site residue.

This sequence belongs to the peptidase S1 family. Kallikrein subfamily. Expressed in testis and submaxillary gland. In the testis, expression localized specifically to Leydig cells in the interstitial tissues.

The enzyme catalyses Preferential cleavage of Arg-|-Xaa bonds in small molecule substrates. Highly selective action to release kallidin (lysyl-bradykinin) from kininogen involves hydrolysis of Met-|-Xaa or Leu-|-Xaa.. Inhibited by protease inhibitors diisopropylfluorophosphate, leupeptin, antipain, benzamidine, phenylmethylsulfonyl fluoride and soybean trypsin inhibitor. Glandular kallikreins cleave Met-Lys and Arg-Ser bonds in kininogen to release Lys-bradykinin. Displays trypsin-like substrate specificity and shows activity towards casein, gelatin, fibronectin and IGFBP3. The protein is Kallikrein 1-related peptidase b21 (Klk1b21) of Mus musculus (Mouse).